The chain runs to 941 residues: Isoleucine--tRNA ligase (941 aa).

The 'HIGH' region motif lies at 59-69 (PYANGNIHIGH). Residue Glu562 participates in L-isoleucyl-5'-AMP binding. The short motif at 603 to 607 (KMSKS) is the 'KMSKS' region element. Lys606 lines the ATP pocket. Cys904, Cys907, Cys924, and Cys927 together coordinate Zn(2+).

Belongs to the class-I aminoacyl-tRNA synthetase family. IleS type 1 subfamily. In terms of assembly, monomer. Zn(2+) serves as cofactor.

The protein resides in the cytoplasm. The enzyme catalyses tRNA(Ile) + L-isoleucine + ATP = L-isoleucyl-tRNA(Ile) + AMP + diphosphate. In terms of biological role, catalyzes the attachment of isoleucine to tRNA(Ile). As IleRS can inadvertently accommodate and process structurally similar amino acids such as valine, to avoid such errors it has two additional distinct tRNA(Ile)-dependent editing activities. One activity is designated as 'pretransfer' editing and involves the hydrolysis of activated Val-AMP. The other activity is designated 'posttransfer' editing and involves deacylation of mischarged Val-tRNA(Ile). This chain is Isoleucine--tRNA ligase, found in Haemophilus influenzae (strain 86-028NP).